We begin with the raw amino-acid sequence, 428 residues long: Probable methanogen homoaconitase large subunit (428 aa).

Residues Cys304, Cys364, and Cys367 each contribute to the [4Fe-4S] cluster site.

This sequence belongs to the aconitase/IPM isomerase family. LeuC type 2 subfamily. As to quaternary structure, heterotetramer of 2 HacA and 2 HacB proteins.

The enzyme catalyses (2R)-homocitrate = (2R,3S)-homoisocitrate. It carries out the reaction (2R)-homocitrate = cis-homoaconitate + H2O. It catalyses the reaction (2R,3S)-homoisocitrate = cis-homoaconitate + H2O. The catalysed reaction is cis-(homo)2aconitate + H2O = (2R,3S)-iso(homo)2citrate. The enzyme catalyses cis-(homo)3aconitate + H2O = (2R,3S)-iso(homo)3citrate. It participates in organic acid metabolism; 2-oxosuberate biosynthesis. Component of a hydro-lyase with broad substrate specificity for cis-unsaturated tricarboxylic acids. Catalyzes both the reversible dehydration of (R)-homocitrate ((R)-2-hydroxybutane-1,2,4-tricarboxylate) to produce cis-homoaconitate ((Z)-but-1-ene-1,2,4-tricarboxylate), and its hydration to homoisocitrate ((1R,2S)-1-hydroxybutane-1,2,4-tricarboxylate). Is also able to hydrate the analogous longer chain substrates cis-homo(2)-aconitate, cis-homo(3)-aconitate. These reactions are part of the biosynthesis pathway of coenzyme B. This is Probable methanogen homoaconitase large subunit (hacA) from Methanothermobacter thermautotrophicus (strain ATCC 29096 / DSM 1053 / JCM 10044 / NBRC 100330 / Delta H) (Methanobacterium thermoautotrophicum).